Here is a 78-residue protein sequence, read N- to C-terminus: Defensin-like protein 281 (78 aa).

The N-terminal stretch at 1 to 23 is a signal peptide; that stretch reads MASTKYLVLLFICLSVLLTPGLG. Intrachain disulfides connect C37/C60, C46/C72, and C50/C74.

This sequence belongs to the DEFL family.

It is found in the secreted. The sequence is that of Defensin-like protein 281 from Arabidopsis thaliana (Mouse-ear cress).